Here is a 117-residue protein sequence, read N- to C-terminus: MIAKPIYMQGEGDGEDGGTNRGTSVITRVKPKTKRPNLYRVLLLNDDYTPMEFVIHILERFFQKDREAATRIMLHVHQHGVGECGVFTYEVAETKVSQVMDFARQHQHPLQCVMEKK.

This sequence belongs to the ClpS family. As to quaternary structure, binds to the N-terminal domain of the chaperone ClpA.

In terms of biological role, involved in the modulation of the specificity of the ClpAP-mediated ATP-dependent protein degradation. The protein is ATP-dependent Clp protease adapter protein ClpS 1 of Agrobacterium fabrum (strain C58 / ATCC 33970) (Agrobacterium tumefaciens (strain C58)).